A 152-amino-acid chain; its full sequence is UPF0178 protein YaiI (152 aa).

The protein belongs to the UPF0178 family.

The chain is UPF0178 protein YaiI from Shigella boydii serotype 18 (strain CDC 3083-94 / BS512).